A 145-amino-acid polypeptide reads, in one-letter code: UPF0735 ACT domain-containing protein CLH_2637 (145 aa).

The 76-residue stretch at 69–144 (TFNLIVKDQT…YVEKIEFVAM (76 aa)) folds into the ACT domain.

It belongs to the UPF0735 family.

This is UPF0735 ACT domain-containing protein CLH_2637 from Clostridium botulinum (strain Alaska E43 / Type E3).